We begin with the raw amino-acid sequence, 754 residues long: Zinc finger protein with KRAB and SCAN domains 7 (754 aa).

Lys28 is covalently cross-linked (Glycyl lysine isopeptide (Lys-Gly) (interchain with G-Cter in SUMO2)). One can recognise an SCAN box domain in the interval Arg54–Leu136. Residues Thr157–Asp215 are disordered. Composition is skewed to polar residues over residues Ala158–Ser172 and Gln199–Asp215. Positions Val231–Pro306 constitute a KRAB domain. 10 consecutive C2H2-type zinc fingers follow at residues Tyr383–His405, Tyr411–His433, Tyr439–His461, Tyr467–His489, Tyr495–His517, Tyr523–His545, Tyr551–His573, Tyr579–His601, Phe607–His629, and Tyr635–His657. A C2H2-type 11; degenerate zinc finger spans residues Tyr663 to His685. 2 consecutive C2H2-type zinc fingers follow at residues Tyr691–His713 and Tyr719–His741. Residues Asn735–Ser754 form a disordered region.

It belongs to the krueppel C2H2-type zinc-finger protein family.

Its subcellular location is the nucleus. Functionally, may be involved in transcriptional regulation. The sequence is that of Zinc finger protein with KRAB and SCAN domains 7 (ZKSCAN7) from Homo sapiens (Human).